A 651-amino-acid chain; its full sequence is DNA mismatch repair protein MutL (651 aa).

Residues 383–405 (TAAEEPTPAPTSPDLEIGDLDDQ) form a disordered region.

This sequence belongs to the DNA mismatch repair MutL/HexB family.

Its function is as follows. This protein is involved in the repair of mismatches in DNA. It is required for dam-dependent methyl-directed DNA mismatch repair. May act as a 'molecular matchmaker', a protein that promotes the formation of a stable complex between two or more DNA-binding proteins in an ATP-dependent manner without itself being part of a final effector complex. This Lacticaseibacillus casei (strain BL23) (Lactobacillus casei) protein is DNA mismatch repair protein MutL.